The chain runs to 291 residues: ATP synthase gamma chain (291 aa).

It belongs to the ATPase gamma chain family. F-type ATPases have 2 components, CF(1) - the catalytic core - and CF(0) - the membrane proton channel. CF(1) has five subunits: alpha(3), beta(3), gamma(1), delta(1), epsilon(1). CF(0) has three main subunits: a, b and c.

It localises to the cell inner membrane. Produces ATP from ADP in the presence of a proton gradient across the membrane. The gamma chain is believed to be important in regulating ATPase activity and the flow of protons through the CF(0) complex. The sequence is that of ATP synthase gamma chain from Sulfurihydrogenibium sp. (strain YO3AOP1).